A 649-amino-acid polypeptide reads, in one-letter code: Alpha-amylase (649 aa).

E124 (nucleophile) is an active-site residue. The active-site Proton donor is D215.

It belongs to the glycosyl hydrolase 57 family. As to quaternary structure, homodimer.

The catalysed reaction is Endohydrolysis of (1-&gt;4)-alpha-D-glucosidic linkages in polysaccharides containing three or more (1-&gt;4)-alpha-linked D-glucose units.. Its function is as follows. Displays a broad range of substrate specificity, with the capacity to hydrolyze carbohydrates as simple as maltotriose. The sequence is that of Alpha-amylase (amyA) from Pyrococcus furiosus (strain ATCC 43587 / DSM 3638 / JCM 8422 / Vc1).